Reading from the N-terminus, the 63-residue chain is Race-specific elicitor A9 (63 aa).

The N-terminal stretch at 1 to 23 (MKLSLLSVELALLIATTLPLCWA) is a signal peptide. The propeptide occupies 24 to 35 (AALPVGLGVGLD). 3 disulfide bridges follow: Cys-37–Cys-51, Cys-41–Cys-54, and Cys-47–Cys-61.

Its function is as follows. This necrosis-inducing peptide induces a hypersensitive response on Cf-9 tomato genotypes. Race-specific elicitors are compounds which only induce defense responses in genotypes of host plants which are resistant to the pathogenic race that produces the elicitor, but not in susceptible genotypes. The chain is Race-specific elicitor A9 (AVR9) from Passalora fulva (Tomato leaf mold).